We begin with the raw amino-acid sequence, 627 residues long: MPHHRASSGQDHLRAGWEQRLERSLPAPRVGLLWMGLGLALVLALFDSTVLWVPARAYPLPSEGHSVKFSAIAPPLQSAFGWQNLTCPACKVLFTALNHGLKKEPNVARVGSVAIKICKMLNIAPLDVCQSAVHLFEDDVVEVWTRSVLSPSEACGLLLGSSCGHWDIFSTWNISLPSVPKPPPKPPSPPAPGAPVSRVLFLTDLHWDHEYLEGTDPYCADPLCCRRGSGWPPNSQKGAGFWGEYSKCDLPLRTLESLLKGLGPAGPFEMVYWTGDIPAHDVWQQSRQDQLRALTTITDLVRKFLGPVPVYPAVGNHESTPVNGFPPPFIKGNQSSQWLYEAMAKAWEPWLPADALHTLRIGGFYALTPRPGLRLISLNMNFCSRENFWLLINSTDPAGQLQWLVEELQAAENRGDKVHIIGHIPPGHCLKSWSWNYYKIIARYENTLAGQFFGHTHVDEFEIFYDEETLSRPLAVAFLAPSATTFINLNPGYRVYQIDGNYPGSSHVVLDHETYILNLTQANAAGGTPSWKRLYRARETYGLPDAMPASWHNLVYRMRDDEQLFQTFWFLYHKGHPPSEPCGTPCRLATLCAQLSARADSPALCRHLMPNGSLPDANRLWSRPLLC.

The first 44 residues, 1–44 (MPHHRASSGQDHLRAGWEQRLERSLPAPRVGLLWMGLGLALVLA), serve as a signal peptide directing secretion. Positions 83 to 167 (QNLTCPACKV…LLGSSCGHWD (85 aa)) constitute a Saposin B-type domain. Asparagine 84 carries an N-linked (GlcNAc...) asparagine glycan. Disulfide bonds link cysteine 87/cysteine 163, cysteine 90/cysteine 155, and cysteine 118/cysteine 129. An N-linked (GlcNAc...) asparagine glycan is attached at asparagine 173. Zn(2+) contacts are provided by aspartate 204 and histidine 206. 2 disulfide bridges follow: cysteine 219–cysteine 224 and cysteine 225–cysteine 248. Zn(2+) contacts are provided by aspartate 276 and asparagine 316. N-linked (GlcNAc...) asparagine glycosylation is found at asparagine 333 and asparagine 393. Residues cysteine 383 and cysteine 429 are joined by a disulfide bond. Zn(2+)-binding residues include histidine 423, histidine 455, and histidine 457. Residue serine 506 is modified to Phosphoserine. An N-linked (GlcNAc...) asparagine glycan is attached at asparagine 518. Intrachain disulfides connect cysteine 582–cysteine 586 and cysteine 592–cysteine 605. Residue asparagine 611 is glycosylated (N-linked (GlcNAc...) asparagine).

Belongs to the acid sphingomyelinase family. As to quaternary structure, monomer. Interacts with SORT1; the interaction is required for SMPD1 targeting to lysosomes. Zn(2+) serves as cofactor. Proteolytically processed. Mature lysosomal form arises from C-terminal proteolytic processing of pro-sphingomyelin phosphodiesterase. Post-translationally, both lysosomal and secreted forms are glycosylated but they show a differential pattern of glycosylation. In terms of processing, phosphorylated at Ser-506 by PRKCD upon stress stimuli. Phosphorylation is required for secretion. This form is generated following cleavage by CASP7 in the extracellular milieu. It shows increased activity.

It localises to the lysosome. The protein localises to the lipid droplet. The protein resides in the secreted. Its subcellular location is the extracellular space. It carries out the reaction a sphingomyelin + H2O = phosphocholine + an N-acylsphing-4-enine + H(+). The enzyme catalyses N-(octadecanoyl)-sphing-4-enine-1-phosphocholine + H2O = N-octadecanoylsphing-4-enine + phosphocholine + H(+). The catalysed reaction is a 1,2-diacyl-sn-glycero-3-phosphocholine + H2O = phosphocholine + a 1,2-diacyl-sn-glycerol + H(+). It catalyses the reaction 1,2-dihexadecanoyl-sn-glycero-3-phosphocholine + H2O = 1,2-dihexadecanoyl-sn-glycerol + phosphocholine + H(+). Hydrolysis of liposomal sphingomyelin is stimulated by incorporation of diacylglycerol (DAG), ceramide and free fatty acids into the liposomal membranes. Phosphatidylcholine hydrolysis is inhibited by incorporation of cholesterol, ceramide, DAG, monoacylglycerol and fatty acids. Functionally, converts sphingomyelin to ceramide. Exists as two enzymatic forms that arise from alternative trafficking of a single protein precursor, one that is targeted to the endolysosomal compartment, whereas the other is released extracellularly. However, in response to various forms of stress, lysosomal exocytosis may represent a major source of the secretory form. In the lysosomes, converts sphingomyelin to ceramide. Plays an important role in the export of cholesterol from the intraendolysosomal membranes. Also has phospholipase C activities toward 1,2-diacylglycerolphosphocholine and 1,2-diacylglycerolphosphoglycerol. Modulates stress-induced apoptosis through the production of ceramide. In terms of biological role, when secreted, modulates cell signaling with its ability to reorganize the plasma membrane by converting sphingomyelin to ceramide. Secreted form is increased in response to stress and inflammatory mediators such as IL1B, IFNG or TNF as well as upon infection with bacteria and viruses. Produces the release of ceramide in the outer leaflet of the plasma membrane playing a central role in host defense. Ceramide reorganizes these rafts into larger signaling platforms that are required to internalize P.aeruginosa, induce apoptosis and regulate the cytokine response in infected cells. In wounded cells, the lysosomal form is released extracellularly in the presence of Ca(2+) and promotes endocytosis and plasma membrane repair. Its function is as follows. This form is generated following cleavage by CASP7 in the extracellular milieu in response to bacterial infection. It shows increased ability to convert sphingomyelin to ceramide and promotes plasma membrane repair. Plasma membrane repair by ceramide counteracts the action of gasdermin-D (GSDMD) perforin (PRF1) pores that are formed in response to bacterial infection. Functionally, (Microbial infection) Secretion is activated by bacteria such as P.aeruginosa, this activation results in the release of ceramide in the outer leaflet of the plasma membrane which facilitates the infection. The sequence is that of Sphingomyelin phosphodiesterase from Mus musculus (Mouse).